Consider the following 813-residue polypeptide: Protein tramtrack, alpha isoform (813 aa).

The BTB domain occupies 33 to 98 (TDVTLAVEGQ…MYRGEVSVDQ (66 aa)). Disordered regions lie at residues 118-148 (EVND…PQLQ), 171-324 (ANAG…GPSE), 356-428 (TTPA…MPKK), and 526-585 (AGLP…LDDQ). A compositionally biased stretch (low complexity) spans 125–145 (SPAAAAAGAGATGSESTATTP). Residues 176–187 (TPTLPVQPSLLS) show a composition bias toward polar residues. Residues 192 to 201 (PKRKRGRPRK) are compositionally biased toward basic residues. Phosphoserine is present on residues Ser203, Ser205, and Ser206. Position 209 is a phosphothreonine (Thr209). Basic and acidic residues predominate over residues 254–285 (HTDDLNESRDSLPSKRSKNSKDHRVVSHHEDN). Composition is skewed to polar residues over residues 302–324 (LFGS…GPSE), 356–369 (TTPA…TPTK), and 377–388 (ATGSNNSNSLLK). The span at 560 to 578 (SGKKGAKRPIQRRRVRRKA) shows a compositional bias: basic residues. C2H2-type zinc fingers lie at residues 610 to 638 (YRCT…FLYH) and 646 to 669 (FPCP…KMTH). Residue Ser682 is modified to Phosphoserine.

Interacts with CoRest/CG33525, suggesting that it acts by recruiting a CoRest-containing corepressor complex. Interacts with phyl.

It is found in the nucleus. Functionally, binds to a number of sites in the transcriptional regulatory region of ftz. Isoform alpha is required to repress genes that promote the R7 cell fate. Probable repressor of the transcription of the segmentation genes ftz, eve, h, odd, run, and en. May bind to the region 5'-AGGG[CT]GG-3'. Degradation of ttk is directed by binding of sinah or sina, via the adapter molecule phyl which binds to the BTB domain of ttk. The protein is Protein tramtrack, alpha isoform (ttk) of Drosophila melanogaster (Fruit fly).